A 249-amino-acid chain; its full sequence is Indole-3-glycerol phosphate synthase (249 aa).

It belongs to the TrpC family.

It catalyses the reaction 1-(2-carboxyphenylamino)-1-deoxy-D-ribulose 5-phosphate + H(+) = (1S,2R)-1-C-(indol-3-yl)glycerol 3-phosphate + CO2 + H2O. The protein operates within amino-acid biosynthesis; L-tryptophan biosynthesis; L-tryptophan from chorismate: step 4/5. The sequence is that of Indole-3-glycerol phosphate synthase from Pyrobaculum aerophilum (strain ATCC 51768 / DSM 7523 / JCM 9630 / CIP 104966 / NBRC 100827 / IM2).